The chain runs to 230 residues: Isoprenyl transferase (230 aa).

Asp-14 is a catalytic residue. Asp-14 lines the Mg(2+) pocket. Residues 15–18, Trp-19, Arg-27, His-31, and 59–61 contribute to the substrate site; these read GNGR and STE. Residue Asn-62 is the Proton acceptor of the active site. Residues Trp-63, Arg-65, Arg-175, and 181 to 183 each bind substrate; that span reads RIS. Position 194 (Glu-194) interacts with Mg(2+).

The protein belongs to the UPP synthase family. In terms of assembly, homodimer. Mg(2+) is required as a cofactor.

Catalyzes the condensation of isopentenyl diphosphate (IPP) with allylic pyrophosphates generating different type of terpenoids. The polypeptide is Isoprenyl transferase (Fusobacterium nucleatum subsp. nucleatum (strain ATCC 25586 / DSM 15643 / BCRC 10681 / CIP 101130 / JCM 8532 / KCTC 2640 / LMG 13131 / VPI 4355)).